The primary structure comprises 131 residues: MAIFGKLTKLKSAIKKWPSLTKNHHSTMCTASTAVSEVSKCEDLHVVYVGKSRRPYMLSSHVIAHPLFQELLDRSSRFIEERHDQETVLVACEVVLFEHLLWMLKNSSSDHGDEDDRERGSVEELAEFYTY.

It belongs to the ARG7 family.

Functionally, may be involved in the regulation of ethylene receptor signaling. Promotes cell expansion and plant growth. The polypeptide is Auxin-responsive protein SAUR77 (Arabidopsis thaliana (Mouse-ear cress)).